The following is a 471-amino-acid chain: UDP-N-acetylmuramoylalanine--D-glutamate ligase (471 aa).

120 to 126 (GSNGKTT) serves as a coordination point for ATP.

The protein belongs to the MurCDEF family.

Its subcellular location is the cytoplasm. It catalyses the reaction UDP-N-acetyl-alpha-D-muramoyl-L-alanine + D-glutamate + ATP = UDP-N-acetyl-alpha-D-muramoyl-L-alanyl-D-glutamate + ADP + phosphate + H(+). The protein operates within cell wall biogenesis; peptidoglycan biosynthesis. In terms of biological role, cell wall formation. Catalyzes the addition of glutamate to the nucleotide precursor UDP-N-acetylmuramoyl-L-alanine (UMA). The protein is UDP-N-acetylmuramoylalanine--D-glutamate ligase of Nitrosomonas europaea (strain ATCC 19718 / CIP 103999 / KCTC 2705 / NBRC 14298).